An 849-amino-acid chain; its full sequence is Disks large homolog 3 (849 aa).

Residues D32–S101 form a disordered region. Gly residues predominate over residues P41–G53. A compositionally biased stretch (polar residues) spans Q57–P69. PDZ domains are found at residues E149–R235, E244–P330, and K404–R484. S157 bears the Phosphoserine mark. The 71-residue stretch at K519 to E589 folds into the SH3 domain. Residues A659–E834 enclose the Guanylate kinase-like domain. Y705 carries the phosphotyrosine modification.

It belongs to the MAGUK family. Interacts through its PDZ domains with NETO1 and APC. Interacts through its first two PDZ domains with ERBB4. Interacts through its third PDZ domain with NLGN1, and probably with NLGN2 and NLGN3. Interacts through its PDZ domains with GRIN2B and SYNGAP1. Interacts through its guanylate kinase-like domain with DLGAP1, DLGAP2, DLGAP3 and DLGAP4. Interacts with FRMPD4 (via C-terminus). Interacts with LRFN2. Interacts with LRFN1 and LRFN4. Interacts with FLTP. Interacts with DGKI (via PDZ-binding motif).

Functionally, required for learning most likely through its role in synaptic plasticity following NMDA receptor signaling. The protein is Disks large homolog 3 (Dlg3) of Rattus norvegicus (Rat).